The chain runs to 272 residues: EID1-like F-box protein 3 (272 aa).

In terms of domain architecture, F-box spans 29 to 81; sequence SGKSGIENERVLVLVFESISWDIHTLCTIASLSRRFCAIARRILWRRLCVNRA.

The protein is EID1-like F-box protein 3 (EDL3) of Arabidopsis thaliana (Mouse-ear cress).